The chain runs to 249 residues: Triosephosphate isomerase (249 aa).

9 to 11 (NWK) serves as a coordination point for substrate. His-95 (electrophile) is an active-site residue. The active-site Proton acceptor is Glu-167. Residues Gly-173, Ser-213, and 234–235 (GG) each bind substrate.

This sequence belongs to the triosephosphate isomerase family. In terms of assembly, homodimer.

It localises to the cytoplasm. The enzyme catalyses D-glyceraldehyde 3-phosphate = dihydroxyacetone phosphate. The protein operates within carbohydrate biosynthesis; gluconeogenesis. Its pathway is carbohydrate degradation; glycolysis; D-glyceraldehyde 3-phosphate from glycerone phosphate: step 1/1. Functionally, involved in the gluconeogenesis. Catalyzes stereospecifically the conversion of dihydroxyacetone phosphate (DHAP) to D-glyceraldehyde-3-phosphate (G3P). The protein is Triosephosphate isomerase of Dictyoglomus thermophilum (strain ATCC 35947 / DSM 3960 / H-6-12).